Consider the following 183-residue polypeptide: Dual-action ribosomal maturation protein DarP (183 aa).

The protein belongs to the DarP family.

The protein resides in the cytoplasm. Its function is as follows. Member of a network of 50S ribosomal subunit biogenesis factors which assembles along the 30S-50S interface, preventing incorrect 23S rRNA structures from forming. Promotes peptidyl transferase center (PTC) maturation. In Salmonella gallinarum (strain 287/91 / NCTC 13346), this protein is Dual-action ribosomal maturation protein DarP.